Here is a 304-residue protein sequence, read N- to C-terminus: tRNA pseudouridine synthase B (304 aa).

D47 acts as the Nucleophile in catalysis. The interval 85-105 (TNTDDGEGEVTETSDARPSDD) is disordered.

The protein belongs to the pseudouridine synthase TruB family. Type 1 subfamily.

The catalysed reaction is uridine(55) in tRNA = pseudouridine(55) in tRNA. Responsible for synthesis of pseudouridine from uracil-55 in the psi GC loop of transfer RNAs. The chain is tRNA pseudouridine synthase B from Dinoroseobacter shibae (strain DSM 16493 / NCIMB 14021 / DFL 12).